The primary structure comprises 838 residues: Rab effector MyRIP (838 aa).

The RabBD domain occupies 4-124; it reads KLDLSGLSNN…TQSLEWFYNN (121 aa). An FYVE-type zinc finger spans residues 58 to 112; it reads KFNEHCCIRCCSPFTFLLNPKRQCLDCHYNICKSCCSYSQSERGYICAACQKSRH. Residues 188-237 are a coiled coil; it reads ADTLTVALRVAEEAIEEAIAKAENYKDSLEKQNEARYLHEHKEELIEELA. Polar residues-rich tracts occupy residues 263–290 and 451–484; these read QNQKSELPSPTSTQNPLATQNSHSTSQP and TFTQHPPITSPSSGQYTNTETLNSDSETSPSPST. Disordered regions lie at residues 263-331, 444-501, 525-570, and 681-838; these read QNQK…TEVE, SQHD…ETHL, NFNP…LYSA, and ERDV…EKRN. Composition is skewed to basic and acidic residues over residues 697 to 736 and 753 to 838; these read NKQEDRVSEKDSGKLRPKERRESKRESKLREMEKQSERQT and RQMK…EKRN. Positions 714–833 form a coiled coil; the sequence is KERRESKRES…DLEKKRKSIR (120 aa).

Interacts with prkar2aa.

It is found in the cytoplasm. Its subcellular location is the perinuclear region. The protein localises to the cytoplasmic vesicle. It localises to the secretory vesicle. May link secretory vesicles to actin filaments. May function as a protein kinase A-anchoring protein (AKAP). May act as a scaffolding protein that links PKA to components of the exocytosis machinery, thus facilitating exocytosis. The polypeptide is Rab effector MyRIP (myrip) (Danio rerio (Zebrafish)).